The primary structure comprises 134 residues: Histone H2A (134 aa).

Positions 1-11 (MTGGGKSGGKA) are enriched in gly residues. Residues 1 to 24 (MTGGGKSGGKASGSKNAQSRSSKA) form a disordered region. Residues K6 and K10 each carry the N6-acetyllysine modification. At Q107 the chain carries N5-methylglutamine.

This sequence belongs to the histone H2A family. In terms of assembly, the nucleosome is a histone octamer containing two molecules each of H2A, H2B, H3 and H4 assembled in one H3-H4 heterotetramer and two H2A-H2B heterodimers. The octamer wraps approximately 147 bp of DNA. Acetylated by ESA1 to form H2AK4ac and H2AK7ac.

It is found in the nucleus. The protein localises to the chromosome. Core component of nucleosome. Nucleosomes wrap and compact DNA into chromatin, limiting DNA accessibility to the cellular machineries which require DNA as a template. Histones thereby play a central role in transcription regulation, DNA repair, DNA replication and chromosomal stability. DNA accessibility is regulated via a complex set of post-translational modifications of histones, also called histone code, and nucleosome remodeling. This Gibberella zeae (strain ATCC MYA-4620 / CBS 123657 / FGSC 9075 / NRRL 31084 / PH-1) (Wheat head blight fungus) protein is Histone H2A (HTA1).